Here is a 130-residue protein sequence, read N- to C-terminus: U-scoloptoxin(16)-Er4a (130 aa).

An N-terminal signal peptide occupies residues 1 to 26; it reads MNTVSVVQFLAVGCAVFVLYGRGVFA.

It belongs to the scoloptoxin-16 family. In terms of processing, contains 3 disulfide bonds. As to expression, expressed by the venom gland.

The protein localises to the secreted. This chain is U-scoloptoxin(16)-Er4a, found in Ethmostigmus rubripes (Giant centipede).